The sequence spans 275 residues: Large ribosomal subunit protein uL2 (275 aa).

The interval 223–275 (AAMNANDHPHGGGEAKAGQGNPHPVTPWGVPTKGYKTRKNKRTQQFIVRDRRG) is disordered.

Belongs to the universal ribosomal protein uL2 family. Part of the 50S ribosomal subunit. Forms a bridge to the 30S subunit in the 70S ribosome.

In terms of biological role, one of the primary rRNA binding proteins. Required for association of the 30S and 50S subunits to form the 70S ribosome, for tRNA binding and peptide bond formation. It has been suggested to have peptidyltransferase activity; this is somewhat controversial. Makes several contacts with the 16S rRNA in the 70S ribosome. This chain is Large ribosomal subunit protein uL2, found in Xanthomonas campestris pv. campestris (strain 8004).